Consider the following 331-residue polypeptide: N-arachidonyl glycine receptor (331 aa).

Residues 1–26 are Extracellular-facing; sequence MAIPSNRDQLALSNGSHPEEYKIAAL. Asparagine 14 carries an N-linked (GlcNAc...) asparagine glycan. Residues 27-47 form a helical membrane-spanning segment; sequence VFYSCIFLIGLLVNVTALWVF. Residues 48–56 lie on the Cytoplasmic side of the membrane; that stretch reads SCTTKKRTT. A helical membrane pass occupies residues 57-77; the sequence is VTIYMMNVALLDLVFILSLPF. Residues 78 to 95 lie on the Extracellular side of the membrane; it reads RMFYYAKGEWPFGDYFCH. A disulfide bridge connects residues cysteine 94 and cysteine 172. Residues 96–116 traverse the membrane as a helical segment; it reads ILGALVVFYPSLALWLLALIS. The Cytoplasmic segment spans residues 117 to 138; sequence ADRYMAIVQPKYAKELKNTGKA. The helical transmembrane segment at 139–159 threads the bilayer; the sequence is VLACVGVWIMTLTTTVPLLLL. Residues 160 to 191 lie on the Extracellular side of the membrane; the sequence is DEDPDKASSPATCLKISDIIHLKAVNVLNFTR. A glycan (N-linked (GlcNAc...) asparagine) is linked at asparagine 188. Residues 192-212 traverse the membrane as a helical segment; sequence LIFFFLIPLFIMIGCYVVIIH. Residues 213–236 lie on the Cytoplasmic side of the membrane; it reads SLLRGQTSKLKPKVKEKSIRIIVT. The helical transmembrane segment at 237-257 threads the bilayer; the sequence is LLLQVLACFVPFHICFALLML. Residues 258–268 are Extracellular-facing; that stretch reads QGEENSYSPWG. The chain crosses the membrane as a helical span at residues 269–289; sequence AFTTFLMNLSTCLDVVLYYIV. Over 290 to 331 the chain is Cytoplasmic; sequence SKQFQARVISVMLYRNYLRSVRRKSVRSGSLRSLSNMNSEML. Position 322 is a phosphoserine (serine 322).

The protein belongs to the G-protein coupled receptor 1 family. As to expression, expressed in testis, spleen and brain (at protein level).

It is found in the cell membrane. Its subcellular location is the cytoplasmic vesicle membrane. G protein-coupled receptor (GPCR) that plays a role in diverse physiological processes particularly within the immune and nervous systems. Becomes active when triggered by various endogenous ligands including endocannabinoid N-arachidonyl glycine (NAGly), delta-9-tetrahydrocannabinol or resolvin D2/RvD2 derived from the omega-3 fatty acid docosahexaenoic acid (DHA). Upon RvD2 binding, facilitates the resolution of inflammation, aiding in tissue repair and homeostasis. Mechanistically, RvD2 ligation initiates Galphas protein coupling, activation of cAMP-PKA signaling pathway and phosphorylation of STAT3, leading to RvD2-stimulated macrophage phagocytosis. Mediates NAGly-induced process of reorganization of actin filaments and induction of acrosomal exocytosis. Activation by N-arachidonoyl glycine (NAGly) can also induce apoptosis in macrophages. Plays a role in homeostasis of CD8+ subsets of intraepithelial lymphocytes (IELs) (CD8alphaalpha and CD8alphabeta IELs) in small intestine by supporting preferential migration of CD8alphaalpha T-cells to intraepithelial compartment over lamina propria compartment, and by mediating their reconstitution into small intestine after bone marrow transplant. Participates also in hypotensive responses, mediating reduction in intraocular and blood pressure. The protein is N-arachidonyl glycine receptor of Rattus norvegicus (Rat).